Here is a 308-residue protein sequence, read N- to C-terminus: Protein Bel-1 (308 aa).

The DNA-binding element occupies 94–203 (SKSTCKRLIL…KGTRLPKRRC (110 aa)). The disordered stretch occupies residues 200–242 (KRRCNPSRRYETFREHPPTRKRRSKEGIPTDQQPSTSNGDPMA). A compositionally biased stretch (basic and acidic residues) spans 207-217 (RRYETFREHPP). The Nuclear localization signal motif lies at 217 to 226 (PTRKRRSKEG). The transactivation domain stretch occupies residues 228 to 304 (PTDQQPSTSN…PLGSSEDQLL (77 aa)). Polar residues predominate over residues 229-238 (TDQQPSTSNG).

In terms of assembly, homodimer or homomultimer. Forms complexes with the host nuclear factors NFIA, NFIB, NFIC or NFIX.

It localises to the host nucleus. Its function is as follows. Transcriptional transactivator that activates the viral internal promoter (IP), thereby enhancing its own expression. This transactivation is repressed by nuclear factor I. Also transactivates the long terminal repeat (LTR) promoter, thereby inducing structural gene expression, initiating the late phase of infection. It is therefore a key regulator of viral gene expression. It directly binds to and activates DNA target sites of viral promoters and those of distinct cellular genes. Required for viral replication. The sequence is that of Protein Bel-1 (bel1) from Simian foamy virus type 1 (SFVmac).